The sequence spans 106 residues: MSKAQRMRIKLKSFDYKLLEQSAKKIVETAKNTGAEVSGPVPLPTDREVITIIRAPHKYKDSREQFEIKTHKRLIDIIKPTQKTVDALMRVELPAGVDIEIKLKEV.

It belongs to the universal ribosomal protein uS10 family. As to quaternary structure, part of the 30S ribosomal subunit.

Its function is as follows. Involved in the binding of tRNA to the ribosomes. This Caldicellulosiruptor bescii (strain ATCC BAA-1888 / DSM 6725 / KCTC 15123 / Z-1320) (Anaerocellum thermophilum) protein is Small ribosomal subunit protein uS10.